Here is a 3122-residue protein sequence, read N- to C-terminus: Large tegument protein deneddylase (3122 aa).

The deubiquitination activity stretch occupies residues 1 to 248; sequence MIPAALPHPT…SETYLQDEPF (248 aa). Residues 20–238 enclose the Peptidase C76 domain; sequence VVTGVRNQFA…TAAALHLYGA (219 aa). Active-site residues include Cys40, Asp172, and His174. Disordered regions lie at residues 281–367 and 387–496; these read GSGP…GDAA and RARY…PPGA. Residues 343-353 are compositionally biased toward low complexity; it reads SAPDAAASGPP. 2 stretches are compositionally biased toward basic residues: residues 387-400 and 425-436; these read RARY…RRRP and KAKKKSAPKKKA. Over residues 437-454 the composition is skewed to low complexity; the sequence is PVAAEVPASSPTPIAATV. The interval 548-578 is interaction with inner tegument protein; sequence LELCVIFFFERVLAFLIENGARTHTQAGVAG. Disordered regions lie at residues 2494–2539, 2570–2974, and 3006–3059; these read YQRP…ADPG, ASDD…THLP, and SDDE…SQFG. Pro residues-rich tracts occupy residues 2578–2590 and 2637–2654; these read TPNP…PPPA and PSPP…PPPA. The span at 2655–2667 shows a compositional bias: low complexity; that stretch reads FSGSAAAFSAAVP. A compositionally biased stretch (basic residues) spans 2668–2681; the sequence is RVRRSRRTRAKSRA. Pro residues-rich tracts occupy residues 2690–2700 and 2710–2719; these read GWRPPALPAPV and PDQPPTPESA. The span at 2734-2743 shows a compositional bias: low complexity; sequence ASARGAFPAP. Composition is skewed to pro residues over residues 2744-2753 and 2775-2785; these read TLAPIPPPPA and SPTPPRGPAAG. Composition is skewed to low complexity over residues 2786–2807 and 2814–2825; these read PPRR…SLPS and HAAAVSAAAAAV. Residues 2841–2852 show a composition bias toward pro residues; sequence SPPPLAPGPVAP. The segment covering 2853 to 2867 has biased composition (low complexity); it reads SEPLCGWVVPGGPVA. 11 repeat units span residues 2891–2895, 2896–2900, 2901–2905, 2906–2910, 2911–2915, 2916–2920, 2921–2925, 2926–2930, 2931–2935, 2936–2940, and 2941–2945. The 11 X 5 AA tandem repeats of P-Q-P-P-L stretch occupies residues 2891 to 2945; it reads PQPPLPQPPLPQPPLPQPPLPQPPLPQPPLPQPPLPQPPLPQPPLPQPPLPQPPL. Residues 2891–2947 are compositionally biased toward pro residues; that stretch reads PQPPLPQPPLPQPPLPQPPLPQPPLPQPPLPQPPLPQPPLPQPPLPQPPLPQPPLPP. Polar residues-rich tracts occupy residues 2950-2959 and 2965-2974; these read RTLTPQSRDS and SPTHTNTHLP. A compositionally biased stretch (basic and acidic residues) spans 3006–3020; it reads SDDEHSDADSLRFSD. Residues 3029 to 3045 show a composition bias toward pro residues; it reads PLPPEPHLPPADEPPGP.

Belongs to the herpesviridae large tegument protein family. Interacts with host CUL1 and CUL4A; these interactions inhibit the E3 ligase activity of cullins. Interacts with inner tegument protein. Interacts with capsid vertex specific component CVC2. Interacts with the major capsid protein/MCP. In terms of processing, proteolytically processed, possibly into several polypeptides. Enzymatic activity is only detectable following cleavage of the UL36 protein, which occurs late during viral replication.

It is found in the virion tegument. The protein localises to the host cytoplasm. It localises to the host nucleus. It carries out the reaction Thiol-dependent hydrolysis of ester, thioester, amide, peptide and isopeptide bonds formed by the C-terminal Gly of ubiquitin (a 76-residue protein attached to proteins as an intracellular targeting signal).. Functionally, large tegument protein that plays multiple roles in the viral cycle. During viral entry, remains associated with the capsid while most of the tegument is detached and participates in the capsid transport toward the host nucleus. Plays a role in the routing of the capsid at the nuclear pore complex and subsequent uncoating. Within the host nucleus, acts as a deneddylase and promotes the degradation of nuclear CRLs (cullin-RING ubiquitin ligases) and thereby stabilizes nuclear CRL substrates, while cytoplasmic CRLs remain unaffected. These modifications prevent host cell cycle S-phase progression and create a favorable environment allowing efficient viral genome replication. Participates later in the secondary envelopment of capsids. Indeed, plays a linker role for the association of the outer viral tegument to the capsids together with the inner tegument protein. The chain is Large tegument protein deneddylase from Human herpesvirus 2 (strain HG52) (HHV-2).